The chain runs to 128 residues: Probable 4-amino-4-deoxy-L-arabinose-phosphoundecaprenol flippase subunit ArnF (128 aa).

Residues 1 to 2 (MG) are Cytoplasmic-facing. Residues 3-23 (LMWGLFSVIIASVAQLSLGFA) traverse the membrane as a helical segment. Over 24–35 (ASHLPPMTHLWD) the chain is Periplasmic. Residues 36 to 56 (FIAALLAFGLDARILLLGLLG) traverse the membrane as a helical segment. Over 57–76 (YLLSVFCWYKTLHKLALSKA) the chain is Cytoplasmic. The helical transmembrane segment at 77–97 (YALLSMSYVLVWIASMVLPGW) threads the bilayer. The Periplasmic segment spans residues 98-100 (EGT). Residues 101–121 (FSLKALLGVACIMSGLMLIFL) traverse the membrane as a helical segment. Topologically, residues 122–128 (PMTKQRY) are cytoplasmic.

It belongs to the ArnF family. In terms of assembly, heterodimer of ArnE and ArnF.

The protein resides in the cell inner membrane. It functions in the pathway bacterial outer membrane biogenesis; lipopolysaccharide biosynthesis. Functionally, translocates 4-amino-4-deoxy-L-arabinose-phosphoundecaprenol (alpha-L-Ara4N-phosphoundecaprenol) from the cytoplasmic to the periplasmic side of the inner membrane. In Escherichia coli (strain 55989 / EAEC), this protein is Probable 4-amino-4-deoxy-L-arabinose-phosphoundecaprenol flippase subunit ArnF.